A 163-amino-acid polypeptide reads, in one-letter code: Ribosome maturation factor RimM (163 aa).

Positions glutamate 90–leucine 161 constitute a PRC barrel domain.

It belongs to the RimM family. In terms of assembly, binds ribosomal protein uS19.

Its subcellular location is the cytoplasm. In terms of biological role, an accessory protein needed during the final step in the assembly of 30S ribosomal subunit, possibly for assembly of the head region. Essential for efficient processing of 16S rRNA. May be needed both before and after RbfA during the maturation of 16S rRNA. It has affinity for free ribosomal 30S subunits but not for 70S ribosomes. The sequence is that of Ribosome maturation factor RimM from Anaeromyxobacter dehalogenans (strain 2CP-C).